The following is a 166-amino-acid chain: Phosphopantetheine adenylyltransferase (166 aa).

S11 is a binding site for substrate. ATP contacts are provided by residues 11–12 and H19; that span reads SF. Residues K43, A76, and R90 each coordinate substrate. ATP-binding positions include 91-93, E101, and 126-132; these read GLR and LQPISSS.

Belongs to the bacterial CoaD family. Homohexamer. The cofactor is Mg(2+).

The protein localises to the cytoplasm. The enzyme catalyses (R)-4'-phosphopantetheine + ATP + H(+) = 3'-dephospho-CoA + diphosphate. Its pathway is cofactor biosynthesis; coenzyme A biosynthesis; CoA from (R)-pantothenate: step 4/5. Reversibly transfers an adenylyl group from ATP to 4'-phosphopantetheine, yielding dephospho-CoA (dPCoA) and pyrophosphate. In Streptococcus equi subsp. zooepidemicus (strain MGCS10565), this protein is Phosphopantetheine adenylyltransferase.